The chain runs to 760 residues: Catalase-peroxidase (760 aa).

The disordered stretch occupies residues 1–22 (MSQGECPVKKVPNVAGSGTRNT). The tryptophyl-tyrosyl-methioninium (Trp-Tyr) (with M-268) cross-link spans 93–242 (WHSAGTYRVT…LAAAHMGLIY (150 aa)). The active-site Proton acceptor is the H94. The disordered stretch occupies residues 206-226 (KGEGIMDGDQHKTDKSEPHTS). Positions 213–226 (GDQHKTDKSEPHTS) are enriched in basic and acidic residues. The tryptophyl-tyrosyl-methioninium (Tyr-Met) (with W-93) cross-link spans 242 to 268 (YVNPEGPEGIPDPVAAAHDIRTTFGRM). H283 provides a ligand contact to heme b.

It belongs to the peroxidase family. Peroxidase/catalase subfamily. In terms of assembly, homodimer or homotetramer. Heme b serves as cofactor. Formation of the three residue Trp-Tyr-Met cross-link is important for the catalase, but not the peroxidase activity of the enzyme.

The protein resides in the cytoplasm. It catalyses the reaction H2O2 + AH2 = A + 2 H2O. It carries out the reaction 2 H2O2 = O2 + 2 H2O. Functionally, bifunctional enzyme with both catalase and broad-spectrum peroxidase activity. This Pyrenophora tritici-repentis (strain Pt-1C-BFP) (Wheat tan spot fungus) protein is Catalase-peroxidase.